Reading from the N-terminus, the 132-residue chain is Small ribosomal subunit protein uS13 (132 aa).

Positions 101–125 (RGLPVRGQRTKTNARTRKGPRKTVA) are enriched in basic residues. The disordered stretch occupies residues 101 to 132 (RGLPVRGQRTKTNARTRKGPRKTVANKKIETR).

The protein belongs to the universal ribosomal protein uS13 family. Part of the 30S ribosomal subunit. Forms a loose heterodimer with protein S19. Forms two bridges to the 50S subunit in the 70S ribosome.

Located at the top of the head of the 30S subunit, it contacts several helices of the 16S rRNA. In the 70S ribosome it contacts the 23S rRNA (bridge B1a) and protein L5 of the 50S subunit (bridge B1b), connecting the 2 subunits; these bridges are implicated in subunit movement. Contacts the tRNAs in the A and P-sites. The protein is Small ribosomal subunit protein uS13 of Ureaplasma urealyticum serovar 10 (strain ATCC 33699 / Western).